The sequence spans 154 residues: 3-hydroxyacyl-[acyl-carrier-protein] dehydratase FabZ (154 aa).

The active site involves H57.

It belongs to the thioester dehydratase family. FabZ subfamily.

It localises to the cytoplasm. The catalysed reaction is a (3R)-hydroxyacyl-[ACP] = a (2E)-enoyl-[ACP] + H2O. Involved in unsaturated fatty acids biosynthesis. Catalyzes the dehydration of short chain beta-hydroxyacyl-ACPs and long chain saturated and unsaturated beta-hydroxyacyl-ACPs. In Sinorhizobium fredii (strain NBRC 101917 / NGR234), this protein is 3-hydroxyacyl-[acyl-carrier-protein] dehydratase FabZ.